Consider the following 287-residue polypeptide: Acetylglutamate kinase (287 aa).

Substrate-binding positions include 70–71 (GG), arginine 92, and asparagine 184.

This sequence belongs to the acetylglutamate kinase family. ArgB subfamily.

Its subcellular location is the cytoplasm. The catalysed reaction is N-acetyl-L-glutamate + ATP = N-acetyl-L-glutamyl 5-phosphate + ADP. The protein operates within amino-acid biosynthesis; L-arginine biosynthesis; N(2)-acetyl-L-ornithine from L-glutamate: step 2/4. In terms of biological role, catalyzes the ATP-dependent phosphorylation of N-acetyl-L-glutamate. This chain is Acetylglutamate kinase, found in Dinoroseobacter shibae (strain DSM 16493 / NCIMB 14021 / DFL 12).